We begin with the raw amino-acid sequence, 232 residues long: Large ribosomal subunit protein uL1 (232 aa).

Belongs to the universal ribosomal protein uL1 family. In terms of assembly, part of the 50S ribosomal subunit.

Its function is as follows. Binds directly to 23S rRNA. The L1 stalk is quite mobile in the ribosome, and is involved in E site tRNA release. In terms of biological role, protein L1 is also a translational repressor protein, it controls the translation of the L11 operon by binding to its mRNA. In Paraburkholderia phytofirmans (strain DSM 17436 / LMG 22146 / PsJN) (Burkholderia phytofirmans), this protein is Large ribosomal subunit protein uL1.